Consider the following 334-residue polypeptide: Porphobilinogen deaminase (334 aa).

Cys258 carries the post-translational modification S-(dipyrrolylmethanemethyl)cysteine.

It belongs to the HMBS family. Monomer. Dipyrromethane serves as cofactor.

It carries out the reaction 4 porphobilinogen + H2O = hydroxymethylbilane + 4 NH4(+). The protein operates within porphyrin-containing compound metabolism; protoporphyrin-IX biosynthesis; coproporphyrinogen-III from 5-aminolevulinate: step 2/4. Its function is as follows. Tetrapolymerization of the monopyrrole PBG into the hydroxymethylbilane pre-uroporphyrinogen in several discrete steps. The chain is Porphobilinogen deaminase from Ralstonia nicotianae (strain ATCC BAA-1114 / GMI1000) (Ralstonia solanacearum).